Here is a 165-residue protein sequence, read N- to C-terminus: Glycosyl-4,4'-diaponeurosporenoate acyltransferase (165 aa).

An N-terminal signal peptide occupies residues 1–28 (MKTMKKYIKTAFFCSMYWLIVQLNIANL). The chain crosses the membrane as a helical span at residues 126 to 145 (YINIFYAMIANVPIIIVQRY).

Belongs to the acyltransferase CrtO family.

It is found in the cell membrane. The protein operates within carotenoid biosynthesis; staphyloxanthin biosynthesis; staphyloxanthin from farnesyl diphosphate: step 5/5. Catalyzes the acylation of glycosyl-4,4'-diaponeurosporenoate, i.e. the esterification of glucose at the C6'' position with the carboxyl group of the C(15) fatty acid 12-methyltetradecanoic acid, to yield staphyloxanthin. This is the last step in the biosynthesis of this orange pigment, present in most staphylococci strains. The protein is Glycosyl-4,4'-diaponeurosporenoate acyltransferase (crtO) of Staphylococcus aureus (strain bovine RF122 / ET3-1).